A 454-amino-acid polypeptide reads, in one-letter code: COBRA-like protein 6 (454 aa).

Positions 1 to 24 are cleaved as a signal peptide; sequence MGAMLNLLLVVTVILCSILSPTRF. Residues N104, N191, N320, N355, and N391 are each glycosylated (N-linked (GlcNAc...) asparagine). S429 carries GPI-anchor amidated serine lipidation. A propeptide spans 430 to 454 (removed in mature form); that stretch reads SSSSAVISSVSVVFCFLLHHLLLLV.

The protein belongs to the COBRA family. As to expression, expressed in flowers and siliques.

The protein localises to the cell membrane. The polypeptide is COBRA-like protein 6 (COBL6) (Arabidopsis thaliana (Mouse-ear cress)).